The primary structure comprises 131 residues: Two-component response regulator ORR3 (131 aa).

A Response regulatory domain is found at H12–I129. D62 carries the 4-aspartylphosphate modification.

The protein belongs to the ARR family. Type-A subfamily. Two-component system major event consists of a His-to-Asp phosphorelay between a sensor histidine kinase (HK) and a response regulator (RR). In plants, the His-to-Asp phosphorelay involves an additional intermediate named Histidine-containing phosphotransfer protein (HPt). This multistep phosphorelay consists of a His-Asp-His-Asp sequential transfer of a phosphate group between first a His and an Asp of the HK protein, followed by the transfer to a conserved His of the HPt protein and finally the transfer to an Asp in the receiver domain of the RR protein. As to expression, expressed in roots, mature leaves and flowers, and at low levels in shoots.

Its function is as follows. Functions as a response regulator involved in His-to-Asp phosphorelay signal transduction system. Phosphorylation of the Asp residue in the receiver domain activates the ability of the protein to promote the transcription of target genes. Type-A response regulators seem to act as negative regulators of the cytokinin signaling. The chain is Two-component response regulator ORR3 from Oryza sativa subsp. indica (Rice).